A 146-amino-acid chain; its full sequence is Ribosome-binding factor A (146 aa).

The tract at residues 113 to 146 (IRDEREAQEPAQDPAQDSSQDASVEASDAPDKAE) is disordered.

The protein belongs to the RbfA family. In terms of assembly, monomer. Binds 30S ribosomal subunits, but not 50S ribosomal subunits or 70S ribosomes.

The protein localises to the cytoplasm. Functionally, one of several proteins that assist in the late maturation steps of the functional core of the 30S ribosomal subunit. Associates with free 30S ribosomal subunits (but not with 30S subunits that are part of 70S ribosomes or polysomes). Required for efficient processing of 16S rRNA. May interact with the 5'-terminal helix region of 16S rRNA. In Gemmatimonas aurantiaca (strain DSM 14586 / JCM 11422 / NBRC 100505 / T-27), this protein is Ribosome-binding factor A.